The sequence spans 78 residues: Large ribosomal subunit protein bL28 (78 aa).

Positions 1-25 (MSRVCQVTGKRPTVGNNRSHARNAT) are disordered.

It belongs to the bacterial ribosomal protein bL28 family.

This is Large ribosomal subunit protein bL28 from Alteromonas mediterranea (strain DSM 17117 / CIP 110805 / LMG 28347 / Deep ecotype).